Here is a 379-residue protein sequence, read N- to C-terminus: Cathepsin B-like cysteine proteinase 6 (379 aa).

Positions 1 to 16 (MKTLLFLSCIVVAAYC) are cleaved as a signal peptide. A propeptide spanning residues 17–104 (ACNDNLESVL…LSKTKDLDLD (88 aa)) is cleaved from the precursor. Disulfide bonds link Cys118–Cys147, Cys130–Cys174, Cys166–Cys233, Cys167–Cys170, Cys203–Cys237, and Cys211–Cys223. Cys133 is an active-site residue. Asn196 carries an N-linked (GlcNAc...) asparagine glycan. Residue Asn201 is glycosylated (N-linked (GlcNAc...) asparagine; atypical). Catalysis depends on residues His305 and Asn325.

Belongs to the peptidase C1 family.

The protein is Cathepsin B-like cysteine proteinase 6 (cpr-6) of Caenorhabditis elegans.